We begin with the raw amino-acid sequence, 261 residues long: tRNA pseudouridine synthase A (261 aa).

Residue D51 is the Nucleophile of the active site. Y109 is a substrate binding site.

The protein belongs to the tRNA pseudouridine synthase TruA family. As to quaternary structure, homodimer.

The enzyme catalyses uridine(38/39/40) in tRNA = pseudouridine(38/39/40) in tRNA. Functionally, formation of pseudouridine at positions 38, 39 and 40 in the anticodon stem and loop of transfer RNAs. The sequence is that of tRNA pseudouridine synthase A from Haemophilus ducreyi (strain 35000HP / ATCC 700724).